A 157-amino-acid polypeptide reads, in one-letter code: Protein Smg homolog (157 aa).

Belongs to the Smg family.

The protein is Protein Smg homolog of Aeromonas salmonicida (strain A449).